A 128-amino-acid polypeptide reads, in one-letter code: Azurin (128 aa).

The region spanning 1–128 is the Plastocyanin-like domain; that stretch reads ACDVSIEGND…IMKGTIELGS (128 aa). Cys2 and Cys25 are disulfide-bonded. Cu cation-binding residues include His45, Cys111, His116, and Met120.

In terms of assembly, monomer. Interacts with the AAUA/AAUB heterotetramer complex. Requires Cu cation as cofactor.

The protein localises to the periplasm. Functionally, transfers electrons from cytochrome c551 to cytochrome oxidase. Transfers electrons from the tryptophan tryptophylquinone of the aromatic amine dehydrogenase heterotetramer. The sequence is that of Azurin from Alcaligenes faecalis.